The following is a 1133-amino-acid chain: Early transcription factor large subunit homolog (1133 aa).

The 301-residue stretch at 52 to 352 (KGGRAFFPCD…PNGQPLQRQQ (301 aa)) folds into the Helicase ATP-binding domain. 99-106 (WQTGTGKS) is an ATP binding site. The DEAH box signature appears at 281 to 284 (DEIH). One can recognise a Helicase C-terminal domain in the interval 524–724 (MMKDILSIIR…EGDKALRKHA (201 aa)).

It belongs to the DEAD box helicase family. DEAH subfamily.

The protein localises to the virion. It catalyses the reaction ATP + H2O = ADP + phosphate + H(+). Its function is as follows. Putative initation factor. In Ornithodoros (relapsing fever ticks), this protein is Early transcription factor large subunit homolog.